The chain runs to 179 residues: Interleukin-10 (179 aa).

An N-terminal signal peptide occupies residues 1–19; that stretch reads MPSPALLCCCLVLLAGVGA. 2 cysteine pairs are disulfide-bonded: Cys31-Cys127 and Cys81-Cys133. Residue Asn135 is glycosylated (N-linked (GlcNAc...) asparagine).

The protein belongs to the IL-10 family. In terms of assembly, homodimer. Interacts with IL10RA and IL10RB.

The protein resides in the secreted. In terms of biological role, major immune regulatory cytokine that acts on many cells of the immune system where it has profound anti-inflammatory functions, limiting excessive tissue disruption caused by inflammation. Mechanistically, IL10 binds to its heterotetrameric receptor comprising IL10RA and IL10RB leading to JAK1 and STAT2-mediated phosphorylation of STAT3. In turn, STAT3 translocates to the nucleus where it drives expression of anti-inflammatory mediators. Targets antigen-presenting cells (APCs) such as macrophages and monocytes and inhibits their release of pro-inflammatory cytokines including granulocyte-macrophage colony-stimulating factor /GM-CSF, granulocyte colony-stimulating factor/G-CSF, IL-1 alpha, IL-1 beta, IL-6, IL-8 and TNF-alpha. Also interferes with antigen presentation by reducing the expression of MHC-class II and co-stimulatory molecules, thereby inhibiting their ability to induce T cell activation. In addition, controls the inflammatory response of macrophages by reprogramming essential metabolic pathways including mTOR signaling. The sequence is that of Interleukin-10 (IL10) from Vulpes vulpes (Red fox).